Here is a 241-residue protein sequence, read N- to C-terminus: Neuromodulin (241 aa).

Over residues 1-26 (TKQVEKNEDGDQKIEQDGIKPEDKAH) the composition is skewed to basic and acidic residues. A disordered region spans residues 1–241 (TKQVEKNEDG…EESKADQENA (241 aa)). The region spanning 25–54 (AHKAATKIQASFRGHITRKKLKGEKKGDAP) is the IQ domain. 2 stretches are compositionally biased toward low complexity: residues 80–95 (APAA…AQQE) and 118–131 (SEQP…PAAS). Composition is skewed to basic and acidic residues over residues 132-147 (SEEK…REST) and 159-171 (KADE…EPKQ). The span at 172–198 (ADVPAADTTATTTPAAEDATAKATAQP) shows a compositional bias: low complexity. 2 stretches are compositionally biased toward basic and acidic residues: residues 208–220 (TEEK…ETKP) and 232–241 (EESKADQENA).

The protein belongs to the neuromodulin family. In terms of assembly, binds calmodulin with a greater affinity in the absence of Ca(2+) than in its presence. Post-translationally, palmitoylated. Palmitoylation is essential for plasma membrane association.

Its subcellular location is the cell membrane. It is found in the cell projection. The protein resides in the growth cone membrane. The protein localises to the synapse. It localises to the filopodium membrane. Functionally, this protein is associated with nerve growth. It is a major component of the motile 'growth cones' that form the tips of elongating axons. Plays a role in axonal and dendritic filopodia induction. The sequence is that of Neuromodulin (GAP43) from Serinus canaria (Island canary).